The following is a 252-amino-acid chain: Urease accessory protein UreH (252 aa).

Belongs to the UreD family. UreH, UreF and UreG form a complex that acts as a GTP-hydrolysis-dependent molecular chaperone, activating the urease apoprotein by helping to assemble the nickel containing metallocenter of UreC. The UreE protein probably delivers the nickel.

Its subcellular location is the cytoplasm. Functionally, required for maturation of urease via the functional incorporation of the urease nickel metallocenter. This chain is Urease accessory protein UreH, found in Helicobacter hepaticus (strain ATCC 51449 / 3B1).